A 66-amino-acid polypeptide reads, in one-letter code: MGMRMMFTVFLLVVLATTVVSFTSGRRTFHGRNAAAKASGLVSLTDRRPECCSHPACNVDHPEICR.

The N-terminal stretch at 1-21 is a signal peptide; sequence MGMRMMFTVFLLVVLATTVVS. A propeptide spanning residues 22–49 is cleaved from the precursor; that stretch reads FTSGRRTFHGRNAAAKASGLVSLTDRRP. Intrachain disulfides connect Cys-51–Cys-57 and Cys-52–Cys-65. Positions 53 to 55 are ser-Xaa-Pro motif, crucial for potent interaction with nAChR; the sequence is SHP.

It belongs to the conotoxin A superfamily. In terms of tissue distribution, expressed by the venom duct.

It localises to the secreted. In terms of biological role, alpha-conotoxins act on postsynaptic membranes, they bind to the nicotinic acetylcholine receptors (nAChR) and thus inhibit them. The protein is Alpha-conotoxin-like Tx2 of Conus textile (Cloth-of-gold cone).